The following is a 456-amino-acid chain: Gamma-aminobutyric acid receptor subunit alpha-1 (456 aa).

The N-terminal stretch at 1-27 (MRKSPGLSDYLWAWILLLSTLTGRSYG) is a signal peptide. Residues 28-253 (QPSLQDELKD…FHLKRKIGYF (226 aa)) are Extracellular-facing. The N-linked (GlcNAc...) asparagine glycan is linked to Asn-38. 4-aminobutanoate is bound at residue Arg-94. The N-linked (GlcNAc...) asparagine glycan is linked to Asn-138. Thr-157 provides a ligand contact to 4-aminobutanoate. Cys-166 and Cys-180 are oxidised to a cystine. The helical transmembrane segment at 254-274 (VIQTYLPCIMTVILSQVSFWL) threads the bilayer. Topologically, residues 275 to 279 (NRESV) are cytoplasmic. The chain crosses the membrane as a helical span at residues 280–301 (PARTVFGVTTVLTMTTLSISAR). Topologically, residues 302 to 311 (NSLPKVAYAT) are extracellular. Residues 312–333 (AMDWFIAVCYAFVFSALIEFAT) traverse the membrane as a helical segment. Residues 334 to 421 (VNYFTKRGYA…TFNSVSKIDR (88 aa)) are Cytoplasmic-facing. The chain crosses the membrane as a helical span at residues 422-441 (LSRIAFPLLFGIFNLVYWAT). The Extracellular segment spans residues 442–456 (YLNREPQLKAPTPHQ).

The protein belongs to the ligand-gated ion channel (TC 1.A.9) family. Gamma-aminobutyric acid receptor (TC 1.A.9.5) subfamily. GABRA1 sub-subfamily. Heteropentamer, formed by a combination of alpha (GABRA1-6), beta (GABRB1-3), gamma (GABRG1-3), delta (GABRD), epsilon (GABRE), rho (GABRR1-3), pi (GABRP) and theta (GABRQ) subunits, each subunit exhibiting distinct physiological and pharmacological properties. Interacts with UBQLN1. Interacts with TRAK1. Interacts with KIF21B. Identified in a complex of 720 kDa composed of LHFPL4, NLGN2, GABRA1, GABRB2, GABRG2 and GABRB3. Interacts with LHFPL4. Interacts with NLGN2. Interacts with SHISA7; interaction leads to the regulation of GABA(A) receptor trafficking, channel deactivation kinetics and pharmacology.

Its subcellular location is the postsynaptic cell membrane. The protein localises to the cell membrane. It localises to the cytoplasmic vesicle membrane. The enzyme catalyses chloride(in) = chloride(out). Its activity is regulated as follows. Allosterically activated by benzodiazepines, the neuroanesthetic alphaxalone and pentobarbital. Inhibited by the antagonist bicuculline. Potentiated by histamine. Functionally, alpha subunit of the heteropentameric ligand-gated chloride channel gated by gamma-aminobutyric acid (GABA), a major inhibitory neurotransmitter in the brain. GABA-gated chloride channels, also named GABA(A) receptors (GABAAR), consist of five subunits arranged around a central pore and contain GABA active binding site(s) located at the alpha and beta subunit interface(s). When activated by GABA, GABAARs selectively allow the flow of chloride anions across the cell membrane down their electrochemical gradient. Alpha-1/GABRA1-containing GABAARs are largely synaptic. Chloride influx into the postsynaptic neuron following GABAAR opening decreases the neuron ability to generate a new action potential, thereby reducing nerve transmission. GABAARs containing alpha-1 and beta-2 or -3 subunits exhibit synaptogenic activity; the gamma-2 subunit being necessary but not sufficient to induce rapid synaptic contacts formation. GABAARs function also as histamine receptor where histamine binds at the interface of two neighboring beta subunits and potentiates GABA response. GABAARs containing alpha, beta and epsilon subunits also permit spontaneous chloride channel activity while preserving the structural information required for GABA-gated openings. Alpha-1-mediated plasticity in the orbitofrontal cortex regulates context-dependent action selection. Together with rho subunits, may also control neuronal and glial GABAergic transmission in the cerebellum. In Macaca fascicularis (Crab-eating macaque), this protein is Gamma-aminobutyric acid receptor subunit alpha-1 (GABRA1).